A 185-amino-acid polypeptide reads, in one-letter code: Elongation factor P (185 aa).

Belongs to the elongation factor P family.

It is found in the cytoplasm. It participates in protein biosynthesis; polypeptide chain elongation. Functionally, involved in peptide bond synthesis. Stimulates efficient translation and peptide-bond synthesis on native or reconstituted 70S ribosomes in vitro. Probably functions indirectly by altering the affinity of the ribosome for aminoacyl-tRNA, thus increasing their reactivity as acceptors for peptidyl transferase. In Oleidesulfovibrio alaskensis (strain ATCC BAA-1058 / DSM 17464 / G20) (Desulfovibrio alaskensis), this protein is Elongation factor P.